Here is a 339-residue protein sequence, read N- to C-terminus: Glyceraldehyde-3-phosphate dehydrogenase (339 aa).

NAD(+) contacts are provided by residues Arg12–Ile13, Asp39, Arg84, and Ser127. D-glyceraldehyde 3-phosphate contacts are provided by residues Ser157–Thr159, Thr188, Arg203, Thr216–Gly217, and Arg239. Cys158 functions as the Nucleophile in the catalytic mechanism. Residue Asn320 participates in NAD(+) binding.

Belongs to the glyceraldehyde-3-phosphate dehydrogenase family. Homotetramer.

The protein localises to the cytoplasm. The catalysed reaction is D-glyceraldehyde 3-phosphate + phosphate + NAD(+) = (2R)-3-phospho-glyceroyl phosphate + NADH + H(+). It functions in the pathway carbohydrate degradation; glycolysis; pyruvate from D-glyceraldehyde 3-phosphate: step 1/5. In terms of biological role, catalyzes the oxidative phosphorylation of glyceraldehyde 3-phosphate (G3P) to 1,3-bisphosphoglycerate (BPG) using the cofactor NAD. The first reaction step involves the formation of a hemiacetal intermediate between G3P and a cysteine residue, and this hemiacetal intermediate is then oxidized to a thioester, with concomitant reduction of NAD to NADH. The reduced NADH is then exchanged with the second NAD, and the thioester is attacked by a nucleophilic inorganic phosphate to produce BPG. The polypeptide is Glyceraldehyde-3-phosphate dehydrogenase (gap) (Mycobacterium bovis (strain ATCC BAA-935 / AF2122/97)).